The primary structure comprises 367 residues: Anhydro-N-acetylmuramic acid kinase (367 aa).

10 to 17 provides a ligand contact to ATP; it reads GTSLDGVD.

This sequence belongs to the anhydro-N-acetylmuramic acid kinase family.

It carries out the reaction 1,6-anhydro-N-acetyl-beta-muramate + ATP + H2O = N-acetyl-D-muramate 6-phosphate + ADP + H(+). It functions in the pathway amino-sugar metabolism; 1,6-anhydro-N-acetylmuramate degradation. It participates in cell wall biogenesis; peptidoglycan recycling. In terms of biological role, catalyzes the specific phosphorylation of 1,6-anhydro-N-acetylmuramic acid (anhMurNAc) with the simultaneous cleavage of the 1,6-anhydro ring, generating MurNAc-6-P. Is required for the utilization of anhMurNAc either imported from the medium or derived from its own cell wall murein, and thus plays a role in cell wall recycling. In Aliivibrio fischeri (strain ATCC 700601 / ES114) (Vibrio fischeri), this protein is Anhydro-N-acetylmuramic acid kinase.